The primary structure comprises 250 residues: 3-deoxy-manno-octulosonate cytidylyltransferase (250 aa).

The protein belongs to the KdsB family.

It is found in the cytoplasm. It carries out the reaction 3-deoxy-alpha-D-manno-oct-2-ulosonate + CTP = CMP-3-deoxy-beta-D-manno-octulosonate + diphosphate. It functions in the pathway nucleotide-sugar biosynthesis; CMP-3-deoxy-D-manno-octulosonate biosynthesis; CMP-3-deoxy-D-manno-octulosonate from 3-deoxy-D-manno-octulosonate and CTP: step 1/1. Its pathway is bacterial outer membrane biogenesis; lipopolysaccharide biosynthesis. Activates KDO (a required 8-carbon sugar) for incorporation into bacterial lipopolysaccharide in Gram-negative bacteria. The protein is 3-deoxy-manno-octulosonate cytidylyltransferase of Sinorhizobium medicae (strain WSM419) (Ensifer medicae).